A 543-amino-acid chain; its full sequence is Chaperonin GroEL 2 (543 aa).

Residues 29 to 32, 86 to 90, G413, 479 to 481, and D495 contribute to the ATP site; these read TLGP, DGTTT, and NAA.

The protein belongs to the chaperonin (HSP60) family. As to quaternary structure, forms a cylinder of 14 subunits composed of two heptameric rings stacked back-to-back. Interacts with the co-chaperonin GroES.

The protein localises to the cytoplasm. It catalyses the reaction ATP + H2O + a folded polypeptide = ADP + phosphate + an unfolded polypeptide.. Its function is as follows. Together with its co-chaperonin GroES, plays an essential role in assisting protein folding. The GroEL-GroES system forms a nano-cage that allows encapsulation of the non-native substrate proteins and provides a physical environment optimized to promote and accelerate protein folding. This is Chaperonin GroEL 2 from Synechococcus sp. (strain CC9311).